Here is a 453-residue protein sequence, read N- to C-terminus: UDP-N-acetylmuramoylalanine--D-glutamate ligase (453 aa).

Residue 117–123 (GTNGKTT) participates in ATP binding.

The protein belongs to the MurCDEF family.

Its subcellular location is the cytoplasm. It catalyses the reaction UDP-N-acetyl-alpha-D-muramoyl-L-alanine + D-glutamate + ATP = UDP-N-acetyl-alpha-D-muramoyl-L-alanyl-D-glutamate + ADP + phosphate + H(+). The protein operates within cell wall biogenesis; peptidoglycan biosynthesis. Functionally, cell wall formation. Catalyzes the addition of glutamate to the nucleotide precursor UDP-N-acetylmuramoyl-L-alanine (UMA). The polypeptide is UDP-N-acetylmuramoylalanine--D-glutamate ligase (Caldicellulosiruptor saccharolyticus (strain ATCC 43494 / DSM 8903 / Tp8T 6331)).